Here is a 180-residue protein sequence, read N- to C-terminus: Inorganic pyrophosphatase (180 aa).

The substrate site is built by K30, R44, and Y56. The Mg(2+) site is built by D66, D71, and D103. Y142 provides a ligand contact to substrate.

Belongs to the PPase family. As to quaternary structure, homohexamer. It depends on Mg(2+) as a cofactor.

The protein resides in the cytoplasm. It catalyses the reaction diphosphate + H2O = 2 phosphate + H(+). Catalyzes the hydrolysis of inorganic pyrophosphate (PPi) forming two phosphate ions. This chain is Inorganic pyrophosphatase, found in Buchnera aphidicola subsp. Schizaphis graminum (strain Sg).